Reading from the N-terminus, the 559-residue chain is Formate--tetrahydrofolate ligase (559 aa).

66 to 73 contacts ATP; sequence TPPGEGKT.

This sequence belongs to the formate--tetrahydrofolate ligase family.

It carries out the reaction (6S)-5,6,7,8-tetrahydrofolate + formate + ATP = (6R)-10-formyltetrahydrofolate + ADP + phosphate. Its pathway is one-carbon metabolism; tetrahydrofolate interconversion. The protein is Formate--tetrahydrofolate ligase of Nocardioides sp. (strain ATCC BAA-499 / JS614).